Here is a 517-residue protein sequence, read N- to C-terminus: PSTB2-interacting protein 1 (517 aa).

As to quaternary structure, interacts with PDR17/PSTB2 and SCS2.

In terms of biological role, phosphatidic acid-binding protein involved in interorganelle phosphatidylserine (PtdSer) transport. Linkks a PtdSer donor membrane (via binding of SCS2 and phosphatidic acid present in the donor membrane) with an acceptor membrane (via its interaction with PDR17), forming a zone of apposition that facilitates PtdSer transfer. This chain is PSTB2-interacting protein 1, found in Saccharomyces cerevisiae (strain ATCC 204508 / S288c) (Baker's yeast).